The chain runs to 146 residues: Decarboxylase dmxR15 (146 aa).

The 96-residue stretch at 31-126 (PGMSEGDYRN…MHDHEVFADT (96 aa)) folds into the EthD domain.

It belongs to the tpcK family.

The catalysed reaction is atrochrysone carboxylate + H(+) = atrochrysone + CO2. The protein operates within secondary metabolite biosynthesis. In terms of biological role, decarboxylase; part of the gene cluster that mediates the biosynthesis of the dimeric xanthones cryptosporioptides. The pathway begins with the synthesis of atrochrysone thioester by the polyketide synthase dmx-nrPKS. The atrochrysone carboxyl ACP thioesterase dmxR1 then breaks the thioester bond and releases the atrochrysone carboxylic acid from dmx-nrPKS. Atrochrysone carboxylic acid is decarboxylated by the decarboxylase dmxR15, and oxidized by the anthrone oxygenase dmxR16 to yield emodin. Emodin is then reduced to emodin hydroquinone by the oxidoreductase dmxR7. A-ring reduction by the short chain dehydrogenase dmxR18, dehydration by the scytalone dehydratase-like protein dmxR17 and probable spontaneous re-oxidation, results in overall deoxygenation to chrysophanol. Baeyer-Villiger oxidation by the Baeyer-Villiger monooxygenase (BVMO) dmxR6 then yields monodictylactone in equilibrium with monodictyphenone. In the case of the cryptosporioptides biosynthesis, monodictylactone is reduced at C-12 to an alcohol (by the short chain dehydrogenases dmxR12 or dmxR8) and hydroxylated at C-5 by dmxR9, yielding the electron-rich aromatic which could eliminate H(2)O to form the ortho-quinonemethide, followed by tautomerisation to paraquinone and complete the formal reduction to produce the 10-methylgroup. Conjugate addition of C-4a-OH to the resulting paraquinone by the monooxygenase dmxR10 then gives cyclohexadienone, which is then reduced at C-5 by the short chain dehydrogenase dmxR3 to give the dihydroxanthone. The 6,7-epoxide in the cryptosporioptides could be introduced by the cytochrome P450 monooxygenase dmxL3. The highly reducing PKS dmxL2 manufactures butyrate, which is further carboxylated by dmxL1 to form ethylmalonate. It is not yet clear whether the carboxylation occurs while the butyrate is attached to the ACP of dmxL2, but this unusual fungal metabolite could then be esterified to O-5 by the O-acetyltransferase dmxR13. Finally, dimerization performed by dmxR5 gives the observed dimers cryptosporioptides A, B and C as the final products of the pathway. The protein is Decarboxylase dmxR15 of Cryptosporiopsis sp. (strain 8999).